The chain runs to 562 residues: Dihydroxy-acid dehydratase (562 aa).

A Mg(2+)-binding site is contributed by aspartate 80. Cysteine 121 is a [2Fe-2S] cluster binding site. 2 residues coordinate Mg(2+): aspartate 122 and lysine 123. At lysine 123 the chain carries N6-carboxylysine. Residue cysteine 194 coordinates [2Fe-2S] cluster. Glutamate 446 contacts Mg(2+). Residue serine 472 is the Proton acceptor of the active site.

Belongs to the IlvD/Edd family. In terms of assembly, homodimer. The cofactor is [2Fe-2S] cluster. It depends on Mg(2+) as a cofactor.

It carries out the reaction (2R)-2,3-dihydroxy-3-methylbutanoate = 3-methyl-2-oxobutanoate + H2O. The catalysed reaction is (2R,3R)-2,3-dihydroxy-3-methylpentanoate = (S)-3-methyl-2-oxopentanoate + H2O. It functions in the pathway amino-acid biosynthesis; L-isoleucine biosynthesis; L-isoleucine from 2-oxobutanoate: step 3/4. The protein operates within amino-acid biosynthesis; L-valine biosynthesis; L-valine from pyruvate: step 3/4. Its function is as follows. Functions in the biosynthesis of branched-chain amino acids. Catalyzes the dehydration of (2R,3R)-2,3-dihydroxy-3-methylpentanoate (2,3-dihydroxy-3-methylvalerate) into 2-oxo-3-methylpentanoate (2-oxo-3-methylvalerate) and of (2R)-2,3-dihydroxy-3-methylbutanoate (2,3-dihydroxyisovalerate) into 2-oxo-3-methylbutanoate (2-oxoisovalerate), the penultimate precursor to L-isoleucine and L-valine, respectively. The polypeptide is Dihydroxy-acid dehydratase (Staphylococcus aureus (strain COL)).